Reading from the N-terminus, the 158-residue chain is Large ribosomal subunit protein uL16 (158 aa).

This sequence belongs to the universal ribosomal protein uL16 family. As to quaternary structure, part of the 50S ribosomal subunit.

Its function is as follows. Binds 23S rRNA and is also seen to make contacts with the A and possibly P site tRNAs. In Parasynechococcus marenigrum (strain WH8102), this protein is Large ribosomal subunit protein uL16.